A 280-amino-acid chain; its full sequence is Digeranylgeranylglyceryl phosphate synthase (280 aa).

9 helical membrane-spanning segments follow: residues 4 to 24, 27 to 47, 83 to 103, 104 to 124, 128 to 148, 150 to 170, 199 to 219, 222 to 242, and 260 to 280; these read AAYL…AGIL, IIAT…VLTI, LMYA…FTPL, PLAG…SFLK, LIGN…GGAI, GTQG…VMLA, ATIY…LLLY, WGAF…FGAI, and KILK…AVLL.

Belongs to the UbiA prenyltransferase family. DGGGP synthase subfamily. The cofactor is Mg(2+).

It is found in the cell membrane. The catalysed reaction is sn-3-O-(geranylgeranyl)glycerol 1-phosphate + (2E,6E,10E)-geranylgeranyl diphosphate = 2,3-bis-O-(geranylgeranyl)-sn-glycerol 1-phosphate + diphosphate. It functions in the pathway membrane lipid metabolism; glycerophospholipid metabolism. Functionally, prenyltransferase that catalyzes the transfer of the geranylgeranyl moiety of geranylgeranyl diphosphate (GGPP) to the C2 hydroxyl of (S)-3-O-geranylgeranylglyceryl phosphate (GGGP). This reaction is the second ether-bond-formation step in the biosynthesis of archaeal membrane lipids. The sequence is that of Digeranylgeranylglyceryl phosphate synthase from Methanospirillum hungatei JF-1 (strain ATCC 27890 / DSM 864 / NBRC 100397 / JF-1).